The sequence spans 532 residues: Vesicular acetylcholine transporter unc-17 (532 aa).

Residues 1–31 (MGFNVPVINRDSEILKADAKKWLEQQDNQKK) are Cytoplasmic-facing. A helical transmembrane segment spans residues 32-52 (CVLVIVSIALLLDNMLYMVIV). Residues 53–101 (PIIPKYLRDIHNYQVTFEGYHNETSQLANGTYLVREVGGRINFLDEELE) lie on the Lumenal, vesicle side of the membrane. Residues N74 and N81 are each glycosylated (N-linked (GlcNAc...) asparagine). Residues 102–121 (LGWLFASKALLQIFVNPFSG) form a helical membrane-spanning segment. Topologically, residues 122-130 (YIIDRVGYE) are cytoplasmic. A helical membrane pass occupies residues 131 to 151 (IPMILGLCTMFFSTAIFALGK). Residues 152 to 160 (SYGVLLFAR) lie on the Lumenal, vesicle side of the membrane. The chain crosses the membrane as a helical span at residues 161–180 (SLQGFGSAFADTSGLAMIAD). Residues 181–191 (RFTEENERSAA) lie on the Cytoplasmic side of the membrane. The chain crosses the membrane as a helical span at residues 192–213 (LGIALAFISFGCLVAPPFGSVL). Over 214 to 219 (YSLAGK) the chain is Lumenal, vesicle. Residues 220–242 (PVPFLILSFVCLADAIAVFMVIN) traverse the membrane as a helical segment. At 243–266 (PHRRGTDSHGEKVQGTPMWRLFMD) the chain is on the cytoplasmic side. A helical transmembrane segment spans residues 267 to 286 (PFIACCSGALIMANVSLAFL). Topologically, residues 287-303 (EPTITTWMSEMMPDTPG) are lumenal, vesicle. Residues 304–328 (WLVGVIWLPPFFPHVLGVYVTVKML) form a helical membrane-spanning segment. Topologically, residues 329 to 335 (RAFPHHT) are cytoplasmic. Residues 336–356 (WAIAMVGLAMEGIACFAIPYT) form a helical membrane-spanning segment. The Lumenal, vesicle portion of the chain corresponds to 357-367 (TSVMQLVIPLS). The helical transmembrane segment at 368–388 (FVCFGIALIDTSLLPMLGHLV) threads the bilayer. Topologically, residues 389 to 393 (DTRHV) are cytoplasmic. The chain crosses the membrane as a helical span at residues 394–412 (SVYGSVYAIADISYSLAYA). Topologically, residues 413 to 418 (FGPIIA) are lumenal, vesicle. Residues 419-440 (GWIVTNWGFTALNIIIFATNVT) traverse the membrane as a helical segment. The Cytoplasmic segment spans residues 441–532 (YAPVLFLLRK…AGYDPLNPQW (92 aa)).

The protein belongs to the major facilitator superfamily. Vesicular transporter family. Detected in most regions of the nervous system including the nerve ring, the ventral and dorsal nerve cords, and the pharyngeal nervous system. Expressed in most cholinergic neurons. In addition, expressed in SIA, SIB and SMB sublateral motor neurons.

It localises to the cytoplasmic vesicle. Its subcellular location is the secretory vesicle. The protein localises to the synaptic vesicle membrane. Involved in acetylcholine transport into synaptic vesicles. The chain is Vesicular acetylcholine transporter unc-17 from Caenorhabditis elegans.